The sequence spans 232 residues: Fibrillarin-like rRNA/tRNA 2'-O-methyltransferase (232 aa).

S-adenosyl-L-methionine is bound by residues 89–90, 108–109, 133–134, and 153–156; these read TT, EF, DA, and DIAQ.

Belongs to the methyltransferase superfamily. Fibrillarin family. As to quaternary structure, interacts with nop5. Component of box C/D small ribonucleoprotein (sRNP) particles that contain rpl7ae, FlpA and nop5, plus a guide RNA.

In terms of biological role, involved in pre-rRNA and tRNA processing. Utilizes the methyl donor S-adenosyl-L-methionine to catalyze the site-specific 2'-hydroxyl methylation of ribose moieties in rRNA and tRNA. Site specificity is provided by a guide RNA that base pairs with the substrate. Methylation occurs at a characteristic distance from the sequence involved in base pairing with the guide RNA. The sequence is that of Fibrillarin-like rRNA/tRNA 2'-O-methyltransferase from Saccharolobus islandicus (strain M.16.27) (Sulfolobus islandicus).